The primary structure comprises 517 residues: Recombining binding protein suppressor of hairless-like protein (517 aa).

The span at 26-37 (EMQLQSEADRRS) shows a compositional bias: basic and acidic residues. The interval 26-48 (EMQLQSEADRRSLPGTWTRSSPE) is disordered. DNA-binding regions lie at residues 78–88 (QKSYGNEKRFF), 193–198 (SKPSQK), and 220–225 (RLRSQT). The region spanning 387–512 (LISTLELSGG…HQEFTRTNFH (126 aa)) is the IPT/TIG domain.

The protein belongs to the Su(H) family. Interacts weakly with EBNA2. Does not interact with any Notch proteins.

The protein localises to the nucleus. Functionally, putative transcription factor, which cooperates with EBNA2 to activate transcription. This Homo sapiens (Human) protein is Recombining binding protein suppressor of hairless-like protein (RBPJL).